Consider the following 510-residue polypeptide: Protein disulfide-isomerase (510 aa).

The N-terminal stretch at 1 to 19 (MLRRALLCLAVAAAPGLYA) is a signal peptide. The region spanning 20-136 (DAPEEEDHVL…IVNWLKKRTG (117 aa)) is the Thioredoxin 1 domain. Active-site nucleophile residues include C55 and C58. C55 and C58 form a disulfide bridge. K202 carries the N6-acetyllysine modification. An N6-succinyllysine mark is found at K224 and K273. A phosphoserine mark is found at S333 and S359. The Thioredoxin 2 domain occupies 351–477 (GKIKPHLMSQ…FKKFLESGGQ (127 aa)). Catalysis depends on nucleophile residues C399 and C402. C399 and C402 are disulfide-bonded. Residue S429 is modified to Phosphoserine. The interval 473–510 (ESGGQDGAGDDDDLEDLEEAEEPDMEEDDDQKAVKDEL) is disordered. Acidic residues predominate over residues 480–502 (AGDDDDLEDLEEAEEPDMEEDDD). The Prevents secretion from ER motif lies at 507–510 (KDEL).

This sequence belongs to the protein disulfide isomerase family. In terms of assembly, heterodimer; heterodimerizes with the protein microsomal triglyceride transfer MTTP. Homodimer. Homodimer. Monomers and homotetramers may also occur. Interacts with P4HA2, forming a heterotetramer consisting of 2 alpha subunits (P4HA2) and 2 beta (P4HB), where P4HB plays the role of a structural subunit; this tetramer catalyzes the formation of 4-hydroxyproline in collagen. Also constitutes the structural subunit of the microsomal triacylglycerol transfer protein MTTP in mammalian cells. Stabilizes both enzymes and retain them in the ER without contributing to the catalytic activity. Binds UBQLN1. Interacts with ERO1B. Interacts with ILDR2. Interacts with ERN1/IRE1A (via N-terminus); the interaction is enhanced by phosphorylation of P4HB by FAM20C in response to endoplasmic reticulum stress and results in attenuation of ERN1 activity. Phosphorylation of Ser-359 by FAM20C is induced by endoplasmic reticulum stress and results in a functional switch from oxidoreductase to molecular chaperone. It also promotes interaction with ERN1.

Its subcellular location is the endoplasmic reticulum. It localises to the endoplasmic reticulum lumen. The protein localises to the melanosome. It is found in the cell membrane. The catalysed reaction is Catalyzes the rearrangement of -S-S- bonds in proteins.. This multifunctional protein catalyzes the formation, breakage and rearrangement of disulfide bonds. At the cell surface, seems to act as a reductase that cleaves disulfide bonds of proteins attached to the cell. May therefore cause structural modifications of exofacial proteins. Inside the cell, seems to form/rearrange disulfide bonds of nascent proteins. At high concentrations and following phosphorylation by FAM20C, functions as a chaperone that inhibits aggregation of misfolded proteins. At low concentrations, facilitates aggregation (anti-chaperone activity). May be involved with other chaperones in the structural modification of the TG precursor in hormone biogenesis. Also acts as a structural subunit of various enzymes such as prolyl 4-hydroxylase and microsomal triacylglycerol transfer protein MTTP. Receptor for LGALS9; the interaction retains P4HB at the cell surface of Th2 T helper cells, increasing disulfide reductase activity at the plasma membrane, altering the plasma membrane redox state and enhancing cell migration. The protein is Protein disulfide-isomerase (P4HB) of Macaca fuscata fuscata (Japanese macaque).